An 860-amino-acid polypeptide reads, in one-letter code: Photoactivated adenylate cyclase subunit beta (860 aa).

A BLUF 1 domain is found at 56 to 149; sequence LRRLMYLSKS…GRMYGDWHMK (94 aa). In terms of domain architecture, Guanylate cyclase 1 spans 205–333; it reads VVTFIYLVEF…DCINTTSRIA (129 aa). The disordered stretch occupies residues 420-443; it reads RPPIFDDTPKGKPRPRTPGYGGRQ. In terms of domain architecture, BLUF 2 spans 471-563; it reads LTTLTYISQA…RAYPAEWTLT (93 aa). Residues 619-748 form the Guanylate cyclase 2 domain; that stretch reads VMLATDICSF…AVSARVMEVE (130 aa). The disordered stretch occupies residues 819–860; it reads KPLALEPEEAKQDYRVSPGRMRHGDSGRRSNSAQGKRSTQVR. Residues 847–860 are compositionally biased toward polar residues; that stretch reads RSNSAQGKRSTQVR.

It belongs to the adenylyl cyclase class-4/guanylyl cyclase family. As to quaternary structure, heterotetramer of two alpha and two beta subunits. FAD serves as cofactor.

Its subcellular location is the cell projection. The protein localises to the cilium. The protein resides in the flagellum. It carries out the reaction ATP = 3',5'-cyclic AMP + diphosphate. Acts as a photoreceptor for the step-up photophobic response. This is Photoactivated adenylate cyclase subunit beta from Euglena longa (Euglenophycean alga).